The sequence spans 669 residues: Trissin receptor (669 aa).

The span at 1–15 (MIMTMMQTVRAWQQE) shows a compositional bias: polar residues. The segment at 1–90 (MIMTMMQTVR…PTGQQPPRLP (90 aa)) is disordered. The Extracellular portion of the chain corresponds to 1–184 (MIMTMMQTVR…EYIFDRTDVR (184 aa)). Over residues 55-74 (NQNNGSPNSSPNQSTSAFRQ) the composition is skewed to low complexity. Residue Asn66 is glycosylated (N-linked (GlcNAc...) asparagine). Residues 79–89 (HPPTGQQPPRL) show a composition bias toward pro residues. 2 N-linked (GlcNAc...) asparagine glycosylation sites follow: Asn120 and Asn130. A helical transmembrane segment spans residues 185–205 (IIFITLYTLVFCCCFFGNLLV). The Cytoplasmic segment spans residues 206–217 (ILVVTLSRRLRS). Residues 218-238 (ITNFFLANLAFADFCVGLFCV) traverse the membrane as a helical segment. Over 239-269 (MQNLSIYLIESWVFGEFLCRMYQFVHSLSYT) the chain is Extracellular. Residue Asn241 is glycosylated (N-linked (GlcNAc...) asparagine). A disulfide bridge links Cys257 with Cys340. The chain crosses the membrane as a helical span at residues 270–290 (ASIFILVVICMERYFAIVHPI). Residues 291-302 (TCKQILTAARLR) lie on the Cytoplasmic side of the membrane. A helical transmembrane segment spans residues 303–323 (MVIVTVWITSAVYSTPKFVFS). Residues 324-350 (KTIKNIHTQDGQEEEICVLDREMFNSK) are Extracellular-facing. The chain crosses the membrane as a helical span at residues 351-371 (LLDMINFVLLYVMPLLVMTVL). Residues 372–552 (YSKIAIALWR…SSNVLRARRG (181 aa)) are Cytoplasmic-facing. Low complexity predominate over residues 390–401 (VVQHQHQQPQQP). Disordered stretches follow at residues 390-481 (VVQH…RGVS) and 515-537 (AHHQ…AGAT). Residues 414–429 (MYHHHPHHHHHHHQHH) are compositionally biased toward basic residues. Residues 441 to 454 (VGVGLGGGGGGGPG) are compositionally biased toward gly residues. Over residues 455-470 (PSLASGGSSTTSLSRK) the composition is skewed to low complexity. Gly residues predominate over residues 524 to 534 (SVGGGSGGAGA). A helical membrane pass occupies residues 553–573 (VVRMLIIFVLTFALCNLPYHA). At 574–595 (RKMWQYWSRSYRGDSNFNALLT) the chain is on the extracellular side. A helical transmembrane segment spans residues 596 to 616 (PLTFLVTYFNSGVNPLLYAFL). Residues 617–669 (SRNFRKGMKELLLCSWKKGKGKSSSNSSMHHKRKALQTHSLPTDTTHIGNEQL) are Cytoplasmic-facing. The disordered stretch occupies residues 635 to 669 (GKGKSSSNSSMHHKRKALQTHSLPTDTTHIGNEQL). A compositionally biased stretch (polar residues) spans 653–669 (QTHSLPTDTTHIGNEQL).

It belongs to the G-protein coupled receptor 1 family.

It localises to the cell membrane. G-protein coupled receptor which is activated by the Trissin peptide in vitro, leading to increased intracellular calcium ion levels. This Drosophila melanogaster (Fruit fly) protein is Trissin receptor.